The following is a 146-amino-acid chain: MSILDEFRSFIAKGNVMDMAVGIIIGAAFTGIVSSLVADLINPVIGLITGGIDFSNVFVNLGDGDYTSLAAAREAGAPVFAYGAFITAVINFLIIAWVVFLLVKMVNRVKETALHKSPPAAKAEPAGPTQEQLLAEIRVLLKKASA.

3 helical membrane-spanning segments follow: residues 21–41 (VGII…ADLI), 44–64 (VIGL…LGDG), and 83–103 (GAFI…FLLV).

It belongs to the MscL family. As to quaternary structure, homopentamer.

The protein localises to the cell inner membrane. In terms of biological role, channel that opens in response to stretch forces in the membrane lipid bilayer. May participate in the regulation of osmotic pressure changes within the cell. This chain is Large-conductance mechanosensitive channel, found in Cereibacter sphaeroides (strain ATCC 17025 / ATH 2.4.3) (Rhodobacter sphaeroides).